Reading from the N-terminus, the 205-residue chain is Imidazole glycerol phosphate synthase subunit HisH (205 aa).

Positions 6-205 (RVGIIDHGSG…LLTRWLNQLS (200 aa)) constitute a Glutamine amidotransferase type-1 domain. C84 serves as the catalytic Nucleophile. Active-site residues include H185 and E187.

Heterodimer of HisH and HisF.

The protein resides in the cytoplasm. The enzyme catalyses 5-[(5-phospho-1-deoxy-D-ribulos-1-ylimino)methylamino]-1-(5-phospho-beta-D-ribosyl)imidazole-4-carboxamide + L-glutamine = D-erythro-1-(imidazol-4-yl)glycerol 3-phosphate + 5-amino-1-(5-phospho-beta-D-ribosyl)imidazole-4-carboxamide + L-glutamate + H(+). The catalysed reaction is L-glutamine + H2O = L-glutamate + NH4(+). It participates in amino-acid biosynthesis; L-histidine biosynthesis; L-histidine from 5-phospho-alpha-D-ribose 1-diphosphate: step 5/9. Its function is as follows. IGPS catalyzes the conversion of PRFAR and glutamine to IGP, AICAR and glutamate. The HisH subunit catalyzes the hydrolysis of glutamine to glutamate and ammonia as part of the synthesis of IGP and AICAR. The resulting ammonia molecule is channeled to the active site of HisF. This chain is Imidazole glycerol phosphate synthase subunit HisH, found in Cutibacterium acnes (strain DSM 16379 / KPA171202) (Propionibacterium acnes).